Here is a 312-residue protein sequence, read N- to C-terminus: Glycine--tRNA ligase alpha subunit (312 aa).

Belongs to the class-II aminoacyl-tRNA synthetase family. As to quaternary structure, tetramer of two alpha and two beta subunits.

The protein localises to the cytoplasm. The catalysed reaction is tRNA(Gly) + glycine + ATP = glycyl-tRNA(Gly) + AMP + diphosphate. The chain is Glycine--tRNA ligase alpha subunit from Delftia acidovorans (strain DSM 14801 / SPH-1).